The sequence spans 185 residues: Ribosome maturation factor RimM (185 aa).

Residues 108–183 (PGEFHVTDLL…RLEIKTIPGL (76 aa)) enclose the PRC barrel domain.

It belongs to the RimM family. Binds ribosomal protein uS19.

Its subcellular location is the cytoplasm. An accessory protein needed during the final step in the assembly of 30S ribosomal subunit, possibly for assembly of the head region. Essential for efficient processing of 16S rRNA. May be needed both before and after RbfA during the maturation of 16S rRNA. It has affinity for free ribosomal 30S subunits but not for 70S ribosomes. The chain is Ribosome maturation factor RimM from Synechocystis sp. (strain ATCC 27184 / PCC 6803 / Kazusa).